The chain runs to 318 residues: MARRRKGRPIDGVILIDKPAGITSNDTLQKVKRIYFAEKAGHTGALDPLATGMLPLCFGEATKFSQFLLDSDKRYRVVAKLGERTNTSDSDGEVVETREVKVDRGQLERCIAKFRGTTDQIPSMFSALKHEGRPLYEYAREGIEVPRKSRKITVYSIELIRFEGHEVEMEVHCSKGTYIRTITDDLGEMLGCGAHVTYLRRTGVSNYPYENMVTIEHLEALLEKAHREEISPRELLDPLLMPMDSAVQDLPEVNMITELADHVLHGQPVQVFGAPQDGIVRMTSGEERLFIGIGHIDDDGRVAPKRLVVFRDEIEEDK.

The active-site Nucleophile is Asp47.

The protein belongs to the pseudouridine synthase TruB family. Type 1 subfamily.

It carries out the reaction uridine(55) in tRNA = pseudouridine(55) in tRNA. Responsible for synthesis of pseudouridine from uracil-55 in the psi GC loop of transfer RNAs. The polypeptide is tRNA pseudouridine synthase B (Aliivibrio salmonicida (strain LFI1238) (Vibrio salmonicida (strain LFI1238))).